The following is a 297-amino-acid chain: tRNA pseudouridine synthase B (297 aa).

Asp-44 (nucleophile) is an active-site residue.

It belongs to the pseudouridine synthase TruB family. Type 1 subfamily.

It catalyses the reaction uridine(55) in tRNA = pseudouridine(55) in tRNA. Its function is as follows. Responsible for synthesis of pseudouridine from uracil-55 in the psi GC loop of transfer RNAs. The protein is tRNA pseudouridine synthase B of Mycobacterium sp. (strain JLS).